A 97-amino-acid chain; its full sequence is DNA-binding protein HU (97 aa).

Belongs to the bacterial histone-like protein family. In terms of assembly, has been isolated in complexes with 5S rRNA and bL25, and with 5S rRNA, bL25 and uL5. Homodimer.

Histone-like DNA-binding protein which is capable of wrapping DNA to stabilize it, and thus to prevent its denaturation under extreme environmental conditions. This is DNA-binding protein HU from Thermus thermophilus (strain ATCC 27634 / DSM 579 / HB8).